The primary structure comprises 137 residues: Ribosome-binding factor A (137 aa).

This sequence belongs to the RbfA family. Monomer. Binds 30S ribosomal subunits, but not 50S ribosomal subunits or 70S ribosomes.

It localises to the cytoplasm. Its function is as follows. One of several proteins that assist in the late maturation steps of the functional core of the 30S ribosomal subunit. Associates with free 30S ribosomal subunits (but not with 30S subunits that are part of 70S ribosomes or polysomes). Required for efficient processing of 16S rRNA. May interact with the 5'-terminal helix region of 16S rRNA. The sequence is that of Ribosome-binding factor A from Rhodopseudomonas palustris (strain BisB18).